Consider the following 166-residue polypeptide: Large ribosomal subunit protein uL10 (166 aa).

It belongs to the universal ribosomal protein uL10 family. Part of the ribosomal stalk of the 50S ribosomal subunit. The N-terminus interacts with L11 and the large rRNA to form the base of the stalk. The C-terminus forms an elongated spine to which L12 dimers bind in a sequential fashion forming a multimeric L10(L12)X complex.

Functionally, forms part of the ribosomal stalk, playing a central role in the interaction of the ribosome with GTP-bound translation factors. In Limosilactobacillus reuteri (strain DSM 20016) (Lactobacillus reuteri), this protein is Large ribosomal subunit protein uL10.